Consider the following 28-residue polypeptide: KEGYPDGQNGKKIPCAINDNISKTXEQA.

A disordered region spans residues Lys-1 to Ala-28. Polar residues predominate over residues Asp-19–Ala-28.

As to expression, expressed by the venom gland.

It is found in the secreted. Its function is as follows. Causes symptoms of mild intoxication and transient paralysis in insects (A.domestica). The sequence is that of Venom protein from Rhopalurus junceus (Caribbean blue scorpion).